A 288-amino-acid polypeptide reads, in one-letter code: Glycine--tRNA ligase alpha subunit (288 aa).

The protein belongs to the class-II aminoacyl-tRNA synthetase family. Tetramer of two alpha and two beta subunits.

It localises to the cytoplasm. It carries out the reaction tRNA(Gly) + glycine + ATP = glycyl-tRNA(Gly) + AMP + diphosphate. In Rickettsia rickettsii (strain Iowa), this protein is Glycine--tRNA ligase alpha subunit.